We begin with the raw amino-acid sequence, 166 residues long: Thiol peroxidase (166 aa).

Residues 18-166 (LKVGDKAPDV…NYEALLKVLK (149 aa)) enclose the Thioredoxin domain. Cys60 functions as the Cysteine sulfenic acid (-SOH) intermediate in the catalytic mechanism. The cysteines at positions 60 and 94 are disulfide-linked.

The protein belongs to the peroxiredoxin family. Tpx subfamily. Homodimer.

The catalysed reaction is a hydroperoxide + [thioredoxin]-dithiol = an alcohol + [thioredoxin]-disulfide + H2O. Its function is as follows. Thiol-specific peroxidase that catalyzes the reduction of hydrogen peroxide and organic hydroperoxides to water and alcohols, respectively. Plays a role in cell protection against oxidative stress by detoxifying peroxides. This is Thiol peroxidase from Helicobacter pylori (strain J99 / ATCC 700824) (Campylobacter pylori J99).